Consider the following 93-residue polypeptide: Small ribosomal subunit protein uS19 (93 aa).

It belongs to the universal ribosomal protein uS19 family.

Protein S19 forms a complex with S13 that binds strongly to the 16S ribosomal RNA. The chain is Small ribosomal subunit protein uS19 from Ehrlichia canis (strain Jake).